An 828-amino-acid chain; its full sequence is Glycerol-3-phosphate acyltransferase (828 aa).

Positions 309 to 314 (CHRSHI) match the HXXXXD motif motif.

This sequence belongs to the GPAT/DAPAT family.

The protein resides in the cell inner membrane. It carries out the reaction sn-glycerol 3-phosphate + an acyl-CoA = a 1-acyl-sn-glycero-3-phosphate + CoA. It participates in phospholipid metabolism; CDP-diacylglycerol biosynthesis; CDP-diacylglycerol from sn-glycerol 3-phosphate: step 1/3. The protein is Glycerol-3-phosphate acyltransferase of Pseudomonas putida (strain W619).